A 570-amino-acid chain; its full sequence is Proline--tRNA ligase (570 aa).

Belongs to the class-II aminoacyl-tRNA synthetase family. ProS type 1 subfamily. As to quaternary structure, homodimer.

Its subcellular location is the cytoplasm. The catalysed reaction is tRNA(Pro) + L-proline + ATP = L-prolyl-tRNA(Pro) + AMP + diphosphate. Functionally, catalyzes the attachment of proline to tRNA(Pro) in a two-step reaction: proline is first activated by ATP to form Pro-AMP and then transferred to the acceptor end of tRNA(Pro). As ProRS can inadvertently accommodate and process non-cognate amino acids such as alanine and cysteine, to avoid such errors it has two additional distinct editing activities against alanine. One activity is designated as 'pretransfer' editing and involves the tRNA(Pro)-independent hydrolysis of activated Ala-AMP. The other activity is designated 'posttransfer' editing and involves deacylation of mischarged Ala-tRNA(Pro). The misacylated Cys-tRNA(Pro) is not edited by ProRS. This chain is Proline--tRNA ligase, found in Neisseria gonorrhoeae (strain ATCC 700825 / FA 1090).